The sequence spans 643 residues: Threonine--tRNA ligase (643 aa).

Residues 1-62 enclose the TGS domain; that stretch reads MSFSVTLPDG…DEDVEAAIIT (62 aa). Positions 239–537 are catalytic; sequence DHRTIGRDLD…LTEIYKGAFP (299 aa). Zn(2+) is bound by residues Cys333, His384, and His514.

Belongs to the class-II aminoacyl-tRNA synthetase family. Homodimer. Zn(2+) serves as cofactor.

The protein resides in the cytoplasm. The catalysed reaction is tRNA(Thr) + L-threonine + ATP = L-threonyl-tRNA(Thr) + AMP + diphosphate + H(+). Catalyzes the attachment of threonine to tRNA(Thr) in a two-step reaction: L-threonine is first activated by ATP to form Thr-AMP and then transferred to the acceptor end of tRNA(Thr). Also edits incorrectly charged L-seryl-tRNA(Thr). The chain is Threonine--tRNA ligase from Lactobacillus gasseri (strain ATCC 33323 / DSM 20243 / BCRC 14619 / CIP 102991 / JCM 1131 / KCTC 3163 / NCIMB 11718 / NCTC 13722 / AM63).